We begin with the raw amino-acid sequence, 624 residues long: Glycosyltransferase AglD (624 aa).

Residue D201 is part of the active site. 8 consecutive transmembrane segments (helical) span residues 260–280 (VTIV…TLYI), 285–305 (VISV…VIYV), 381–401 (LLTI…TGGL), 427–447 (AAYV…GIAL), 496–518 (VGLT…LLAL), 532–552 (FFAV…GGVG), 556–576 (IAFT…ALAA), and 587–607 (VTIV…TTAV).

The protein belongs to the glycosyltransferase 2 family.

It is found in the cell membrane. It participates in cell surface structure biogenesis; S-layer biogenesis. Involved in the assembly of a N-linked pentasaccharide that decorates the S-layer glycoprotein and flagellins. Catalyzes the addition of the mannose found at position 5 of the pentasaccharide to its own distinct dolichol phosphate carrier. The sequence is that of Glycosyltransferase AglD (aglD) from Haloferax volcanii (strain ATCC 29605 / DSM 3757 / JCM 8879 / NBRC 14742 / NCIMB 2012 / VKM B-1768 / DS2) (Halobacterium volcanii).